A 192-amino-acid chain; its full sequence is 7-methyl-GTP pyrophosphatase (192 aa).

The active-site Proton acceptor is the Asp-69.

This sequence belongs to the Maf family. YceF subfamily. It depends on a divalent metal cation as a cofactor.

The protein resides in the cytoplasm. It carries out the reaction N(7)-methyl-GTP + H2O = N(7)-methyl-GMP + diphosphate + H(+). In terms of biological role, nucleoside triphosphate pyrophosphatase that hydrolyzes 7-methyl-GTP (m(7)GTP). May have a dual role in cell division arrest and in preventing the incorporation of modified nucleotides into cellular nucleic acids. The polypeptide is 7-methyl-GTP pyrophosphatase (maf-1) (Pseudomonas syringae pv. tomato (strain ATCC BAA-871 / DC3000)).